The following is a 96-amino-acid chain: UPF0235 protein YggU (96 aa).

It belongs to the UPF0235 family.

The sequence is that of UPF0235 protein YggU from Salmonella arizonae (strain ATCC BAA-731 / CDC346-86 / RSK2980).